The sequence spans 89 residues: Small ribosomal subunit protein uS15 (89 aa).

It belongs to the universal ribosomal protein uS15 family. As to quaternary structure, part of the 30S ribosomal subunit. Forms a bridge to the 50S subunit in the 70S ribosome, contacting the 23S rRNA.

Functionally, one of the primary rRNA binding proteins, it binds directly to 16S rRNA where it helps nucleate assembly of the platform of the 30S subunit by binding and bridging several RNA helices of the 16S rRNA. Its function is as follows. Forms an intersubunit bridge (bridge B4) with the 23S rRNA of the 50S subunit in the ribosome. This chain is Small ribosomal subunit protein uS15, found in Rhizobium etli (strain CIAT 652).